We begin with the raw amino-acid sequence, 147 residues long: UPF0208 membrane protein CGSHiEE_06015 (147 aa).

2 helical membrane passes run 38–58 and 67–87; these read FAQK…QIYA and IAIL…YWLG.

It belongs to the UPF0208 family.

The protein localises to the cell inner membrane. In Haemophilus influenzae (strain PittEE), this protein is UPF0208 membrane protein CGSHiEE_06015.